Consider the following 257-residue polypeptide: Indole-3-glycerol phosphate synthase (257 aa).

It belongs to the TrpC family.

The enzyme catalyses 1-(2-carboxyphenylamino)-1-deoxy-D-ribulose 5-phosphate + H(+) = (1S,2R)-1-C-(indol-3-yl)glycerol 3-phosphate + CO2 + H2O. It participates in amino-acid biosynthesis; L-tryptophan biosynthesis; L-tryptophan from chorismate: step 4/5. The polypeptide is Indole-3-glycerol phosphate synthase (Chlorobium chlorochromatii (strain CaD3)).